Here is a 666-residue protein sequence, read N- to C-terminus: TATA box-binding protein-associated factor RNA polymerase I subunit B (666 aa).

The RRN7-type zinc-finger motif lies at 1-29 (MICTECENDAFDEEDDGYYYCQRCGVQVE). Zn(2+)-binding residues include cysteine 3, cysteine 6, cysteine 21, and cysteine 24. A B-reader region spans residues 30–64 (NLIQTGVDDGDLIGEGGGTQGALYNPKHRRTEPQP). Disordered stretches follow at residues 45 to 110 (GGGT…VDKE) and 189 to 208 (DSEH…LKRH). The segment at 65–80 (ITPSQPRFTDDTSRYS) is B-linker. Residues 78 to 89 (RYSQFKSQFESE) show a composition bias toward polar residues. Residues 81–285 (QFKSQFESEN…REQMGERSAA (205 aa)) are N-terminal cyclin fold. 2 stretches are compositionally biased toward basic and acidic residues: residues 90-110 (NGNK…VDKE) and 189-202 (DSEH…VKDA). Residues 286 to 288 (CPV) form a C-terminal cyclin fold region. A disordered region spans residues 515-548 (SDGNNPCSSSSRRNESVSIGLDLSSSEHRESSSP). Positions 539 to 548 (SSEHRESSSP) are enriched in basic and acidic residues.

Belongs to the RRN7/TAF1B family. As to quaternary structure, interacts with TFIIF. Interacts with MEE14/CBP1, TBP1 and NRPB1 (via CTD). As to expression, expressed at high levels in seedlings, inflorescences and young siliques and at lower levels in roots. Not detected in leaves and stems. Detected in root tips and shoot apical meristems, in anthers, primarily in microspores with weaker expression in mature pollen grains and in the central cell of the mature female gametophyte. Not expressed in synergids, egg cells, antipodal cells, endosperm cells and fertilized egg cells.

It localises to the nucleus. It is found in the nucleolus. Component of RNA polymerase I core factor complex that acts as a GTF2B/TFIIB-like factor and plays a key role in multiple steps during transcription initiation such as pre-initiation complex (PIC) assembly and postpolymerase recruitment events in polymerase I (Pol I) transcription. Binds rDNA promoters and plays a role in Pol I recruitment. Required for the development of the one-cell zygote and endosperm in embryos. Required for micropylar pollen tube guidance, but has no effect on ovule development and gametophytic cell fate specification. May regulate the transcription of secreted cysteine-rich peptide (CRP) genes in the embryo sac. The sequence is that of TATA box-binding protein-associated factor RNA polymerase I subunit B from Arabidopsis thaliana (Mouse-ear cress).